Consider the following 219-residue polypeptide: Ribosomal RNA small subunit methyltransferase Nep1 (219 aa).

S-adenosyl-L-methionine contacts are provided by residues glycine 178, glycine 183, and 196–201 (LYKAPL).

The protein belongs to the class IV-like SAM-binding methyltransferase superfamily. RNA methyltransferase NEP1 family. As to quaternary structure, homodimer.

It carries out the reaction a pseudouridine in rRNA + S-adenosyl-L-methionine = an N(1)-methylpseudouridine in rRNA + S-adenosyl-L-homocysteine + H(+). Functionally, methyltransferase involved in ribosomal biogenesis. Specifically catalyzes the N1-methylation of the pseudouridine corresponding to position 914 in M.jannaschii 16S rRNA. This is Ribosomal RNA small subunit methyltransferase Nep1 from Thermococcus onnurineus (strain NA1).